We begin with the raw amino-acid sequence, 159 residues long: ATP-dependent Clp protease adapter protein CLPS1, chloroplastic (159 aa).

Residues 1 to 44 (METAICGRLALAPSSLFNSKSGDKHLVSKGPCVNRSILMTLSTS) constitute a chloroplast transit peptide.

The protein belongs to the ClpS family. In terms of assembly, interacts with CLPC1 (via N-terminus) and CLPC2, but not with CLPt1 or CLPT2. Binds to ClpF; this interaction stimulates their association with ClpC. As to expression, expressed exclusively in photosynthetic green tissues with high levels in young, developing leaf tissues.

It is found in the plastid. It localises to the chloroplast stroma. Small adapter protein that modulate the activity of CLPC. Involved in plastid biogenesis in particular when chloroplast protein synthesis capacity is a limiting factor. Probably involved in substrate selection for plastid Clp protease system. Recruitment to ClpC chaperones is facilitated by CLPF thus forming a binary adapter for selective substrate recognition and delivery to plastid Clp protease system (CLPC). This chain is ATP-dependent Clp protease adapter protein CLPS1, chloroplastic, found in Arabidopsis thaliana (Mouse-ear cress).